Here is a 60-residue protein sequence, read N- to C-terminus: Pepsin A (60 aa).

Residues 1–45 constitute a propeptide, activation peptide; it reads FIIKVPLVKKKSLRKNLKEHGLLKDFLKKHSPNPASKYFPQEAAV.

Belongs to the peptidase A1 family.

Its subcellular location is the secreted. The catalysed reaction is Preferential cleavage: hydrophobic, preferably aromatic, residues in P1 and P1' positions. Cleaves 1-Phe-|-Val-2, 4-Gln-|-His-5, 13-Glu-|-Ala-14, 14-Ala-|-Leu-15, 15-Leu-|-Tyr-16, 16-Tyr-|-Leu-17, 23-Gly-|-Phe-24, 24-Phe-|-Phe-25 and 25-Phe-|-Tyr-26 bonds in the B chain of insulin.. Its function is as follows. Shows particularly broad specificity; although bonds involving phenylalanine and leucine are preferred, many others are also cleaved to some extent. This chain is Pepsin A (PGA), found in Ursus thibetanus (Asiatic black bear).